The primary structure comprises 194 residues: MENTQENPTSQNPKPAEETARQAAEAAAPQQEAAANAATDSPASAEQAALAEAQAKIAELQESFLRAKAETENVRRRAQEDVAKAHKFAIESFAEHLLPVIDSLEAAVAHSSDDPAKVREGVELTLRQLTGALEKGRVVALNPVGEKFDPHRHQAISMVPADQEPNTVVAVLQKGFVIADRVLRPALVTVAAPK.

Positions 1–13 (MENTQENPTSQNP) are enriched in polar residues. The segment at 1–50 (MENTQENPTSQNPKPAEETARQAAEAAAPQQEAAANAATDSPASAEQAAL) is disordered. Positions 21-50 (RQAAEAAAPQQEAAANAATDSPASAEQAAL) are enriched in low complexity.

The protein belongs to the GrpE family. In terms of assembly, homodimer.

It localises to the cytoplasm. Functionally, participates actively in the response to hyperosmotic and heat shock by preventing the aggregation of stress-denatured proteins, in association with DnaK and GrpE. It is the nucleotide exchange factor for DnaK and may function as a thermosensor. Unfolded proteins bind initially to DnaJ; upon interaction with the DnaJ-bound protein, DnaK hydrolyzes its bound ATP, resulting in the formation of a stable complex. GrpE releases ADP from DnaK; ATP binding to DnaK triggers the release of the substrate protein, thus completing the reaction cycle. Several rounds of ATP-dependent interactions between DnaJ, DnaK and GrpE are required for fully efficient folding. This Paraburkholderia xenovorans (strain LB400) protein is Protein GrpE.